Consider the following 343-residue polypeptide: S-adenosylmethionine:tRNA ribosyltransferase-isomerase (343 aa).

It belongs to the QueA family. Monomer.

Its subcellular location is the cytoplasm. The enzyme catalyses 7-aminomethyl-7-carbaguanosine(34) in tRNA + S-adenosyl-L-methionine = epoxyqueuosine(34) in tRNA + adenine + L-methionine + 2 H(+). Its pathway is tRNA modification; tRNA-queuosine biosynthesis. Its function is as follows. Transfers and isomerizes the ribose moiety from AdoMet to the 7-aminomethyl group of 7-deazaguanine (preQ1-tRNA) to give epoxyqueuosine (oQ-tRNA). The polypeptide is S-adenosylmethionine:tRNA ribosyltransferase-isomerase (Coxiella burnetii (strain CbuG_Q212) (Coxiella burnetii (strain Q212))).